The sequence spans 189 residues: Gluconokinase (189 aa).

An ATP-binding site is contributed by 16 to 23; that stretch reads GVSGAGKS.

It belongs to the gluconokinase GntK/GntV family. As to quaternary structure, monomer.

The catalysed reaction is D-gluconate + ATP = 6-phospho-D-gluconate + ADP + H(+). It participates in carbohydrate acid metabolism; D-gluconate degradation. Its function is as follows. Phosphorylates gluconate to 6-phosphogluconate. The protein is Gluconokinase of Arabidopsis thaliana (Mouse-ear cress).